Consider the following 404-residue polypeptide: Glucose-1-phosphate adenylyltransferase (404 aa).

Residues tyrosine 99, glycine 164, 179–180 (EK), and serine 197 each bind alpha-D-glucose 1-phosphate.

It belongs to the bacterial/plant glucose-1-phosphate adenylyltransferase family.

The enzyme catalyses alpha-D-glucose 1-phosphate + ATP + H(+) = ADP-alpha-D-glucose + diphosphate. The protein operates within glycan biosynthesis; glycogen biosynthesis. Its function is as follows. Involved in the biosynthesis of ADP-glucose building block, required in the biosynthesis of maltose-1-phosphate (M1P) and in the elongation reactions to produce linear alpha-1,4-glucans. Catalyzes the reaction between ATP and alpha-D-glucose 1-phosphate (G1P) to produce pyrophosphate and ADP-Glc. This chain is Glucose-1-phosphate adenylyltransferase, found in Mycolicibacterium smegmatis (strain ATCC 700084 / mc(2)155) (Mycobacterium smegmatis).